The sequence spans 394 residues: Subtilisin-like protease 4 (394 aa).

The N-terminal stretch at 1 to 17 is a signal peptide; it reads CLKTLSVFLAAFAAADA. Positions 18-116 are excised as a propeptide; sequence RAVFKTQGHK…VEQDQVVRIS (99 aa). The Inhibitor I9 domain maps to 36–115; it reads YIVVMKDGVS…YVEQDQVVRI (80 aa). N-linked (GlcNAc...) asparagine glycosylation occurs at asparagine 100. The Peptidase S8 domain occupies 126–394; sequence SWGLGRVSHR…STTNRLLYNG (269 aa). Catalysis depends on charge relay system residues aspartate 158 and histidine 189. N-linked (GlcNAc...) asparagine glycans are attached at residues asparagine 250 and asparagine 306. Serine 344 (charge relay system) is an active-site residue.

It belongs to the peptidase S8 family.

Its subcellular location is the secreted. Its function is as follows. Secreted subtilisin-like serine protease with keratinolytic activity that contributes to pathogenicity. In Trichophyton equinum (Horse ringworm fungus), this protein is Subtilisin-like protease 4 (SUB4).